The primary structure comprises 189 residues: uncharacterized protein (189 aa).

Basic and acidic residues predominate over residues 1 to 15; that stretch reads MDKHGVKTPLWRKEV. Positions 1 to 77 are disordered; that stretch reads MDKHGVKTPL…SPLRQESSSQ (77 aa). 2 stretches are compositionally biased toward acidic residues: residues 16–29 and 46–56; these read EDPE…EDDS and SATETEEDSRD. Residues 65 to 77 show a composition bias toward polar residues; the sequence is VSYSPLRQESSSQ.

This is an uncharacterized protein from Mus musculus (Mouse).